A 253-amino-acid chain; its full sequence is Imidazole glycerol phosphate synthase subunit HisF (253 aa).

Active-site residues include Asp-11 and Asp-130.

Belongs to the HisA/HisF family. In terms of assembly, heterodimer of HisH and HisF.

It localises to the cytoplasm. It catalyses the reaction 5-[(5-phospho-1-deoxy-D-ribulos-1-ylimino)methylamino]-1-(5-phospho-beta-D-ribosyl)imidazole-4-carboxamide + L-glutamine = D-erythro-1-(imidazol-4-yl)glycerol 3-phosphate + 5-amino-1-(5-phospho-beta-D-ribosyl)imidazole-4-carboxamide + L-glutamate + H(+). Its pathway is amino-acid biosynthesis; L-histidine biosynthesis; L-histidine from 5-phospho-alpha-D-ribose 1-diphosphate: step 5/9. Functionally, IGPS catalyzes the conversion of PRFAR and glutamine to IGP, AICAR and glutamate. The HisF subunit catalyzes the cyclization activity that produces IGP and AICAR from PRFAR using the ammonia provided by the HisH subunit. The polypeptide is Imidazole glycerol phosphate synthase subunit HisF (Acidobacterium capsulatum (strain ATCC 51196 / DSM 11244 / BCRC 80197 / JCM 7670 / NBRC 15755 / NCIMB 13165 / 161)).